The primary structure comprises 290 residues: Ribonuclease HIII (290 aa).

The region spanning 78 to 290 (LPLIGTDEVG…FKNTEKAKNA (213 aa)) is the RNase H type-2 domain. D84, E85, and D187 together coordinate a divalent metal cation.

It belongs to the RNase HII family. RnhC subfamily. Requires Mn(2+) as cofactor. Mg(2+) is required as a cofactor.

The protein localises to the cytoplasm. It carries out the reaction Endonucleolytic cleavage to 5'-phosphomonoester.. Functionally, endonuclease that specifically degrades the RNA of RNA-DNA hybrids. This is Ribonuclease HIII from Streptococcus pneumoniae (strain CGSP14).